The chain runs to 633 residues: Phosphomethylpyrimidine synthase (633 aa).

Substrate contacts are provided by residues Asn245, Met274, Tyr303, His339, 359–361 (SRG), 400–403 (DGLR), and Glu439. His443 is a binding site for Zn(2+). A substrate-binding site is contributed by Tyr466. A Zn(2+)-binding site is contributed by His507. [4Fe-4S] cluster contacts are provided by Cys587, Cys590, and Cys595.

It belongs to the ThiC family. In terms of assembly, homodimer. The cofactor is [4Fe-4S] cluster.

It catalyses the reaction 5-amino-1-(5-phospho-beta-D-ribosyl)imidazole + S-adenosyl-L-methionine = 4-amino-2-methyl-5-(phosphooxymethyl)pyrimidine + CO + 5'-deoxyadenosine + formate + L-methionine + 3 H(+). It participates in cofactor biosynthesis; thiamine diphosphate biosynthesis. Functionally, catalyzes the synthesis of the hydroxymethylpyrimidine phosphate (HMP-P) moiety of thiamine from aminoimidazole ribotide (AIR) in a radical S-adenosyl-L-methionine (SAM)-dependent reaction. The polypeptide is Phosphomethylpyrimidine synthase (Neisseria meningitidis serogroup B (strain ATCC BAA-335 / MC58)).